The primary structure comprises 191 residues: Fe/S biogenesis protein NfuA (191 aa).

Residues Cys-149 and Cys-152 each contribute to the [4Fe-4S] cluster site.

This sequence belongs to the NfuA family. Homodimer. [4Fe-4S] cluster is required as a cofactor.

Involved in iron-sulfur cluster biogenesis. Binds a 4Fe-4S cluster, can transfer this cluster to apoproteins, and thereby intervenes in the maturation of Fe/S proteins. Could also act as a scaffold/chaperone for damaged Fe/S proteins. The sequence is that of Fe/S biogenesis protein NfuA from Cronobacter sakazakii (strain ATCC BAA-894) (Enterobacter sakazakii).